The primary structure comprises 77 residues: Small ribosomal subunit protein bS18 (77 aa).

It belongs to the bacterial ribosomal protein bS18 family. In terms of assembly, part of the 30S ribosomal subunit. Forms a tight heterodimer with protein bS6.

Functionally, binds as a heterodimer with protein bS6 to the central domain of the 16S rRNA, where it helps stabilize the platform of the 30S subunit. The sequence is that of Small ribosomal subunit protein bS18 from Bacillus cytotoxicus (strain DSM 22905 / CIP 110041 / 391-98 / NVH 391-98).